An 87-amino-acid chain; its full sequence is Cytochrome c oxidase subunit 6B1 (87 aa).

The region spanning 28-74 is the CHCH domain; it reads TRNCWQNYLDFHRCQKAMTTKGGNVSVCEWYQRVYQSLCPTSWVTDW. The Cx9C motif signature appears at 31-41; the sequence is CWQNYLDFHRC. 2 disulfides stabilise this stretch: cysteine 31-cysteine 66 and cysteine 41-cysteine 55. Positions 55 to 66 match the Cx10C motif motif; sequence CEWYQRVYQSLC.

The protein resides in the mitochondrion intermembrane space. Its function is as follows. Connects the two COX monomers into the physiological dimeric form. This is Cytochrome c oxidase subunit 6B1 (COX6B1) from Macaca fascicularis (Crab-eating macaque).